The primary structure comprises 480 residues: UDP-glycosyltransferase 708D1 (480 aa).

His20 acts as the Proton acceptor in catalysis. His20 lines the an anthocyanidin pocket. The active-site Charge relay is Asp118. A UDP-alpha-D-glucose-binding site is contributed by Thr141. The segment at 291–292 (NR) is UDP. UDP-alpha-D-glucose-binding residues include Val354, Gln356, His371, Trp374, Asn375, Ser376, Glu379, Asp395, and Gln396.

The protein belongs to the UDP-glycosyltransferase family.

The enzyme catalyses a 3'-hydro-2'-hydroxy-beta-oxodihydrochalcone + UDP-alpha-D-glucose = a 3'-(beta-D-glucopyranosyl)-2'-hydroxy-beta-oxodihydrochalcone + UDP + H(+). UDP-glucose-dependent glucosyltransferase catalyzing the c-glucosylation of the A ring of 2-hydroxynaringenin. Also active toward phloretin, but not toward naringenin and apigenin. The sequence is that of UDP-glycosyltransferase 708D1 from Glycine max (Soybean).